We begin with the raw amino-acid sequence, 330 residues long: Putative aminohydrolase AF_1775 (330 aa).

Positions 54, 56, 181, and 253 each coordinate Zn(2+).

It belongs to the metallo-dependent hydrolases superfamily. ATZ/TRZ family.

The sequence is that of Putative aminohydrolase AF_1775 from Archaeoglobus fulgidus (strain ATCC 49558 / DSM 4304 / JCM 9628 / NBRC 100126 / VC-16).